Here is a 156-residue protein sequence, read N- to C-terminus: Transcription elongation factor GreA (156 aa).

Residues 2–78 (AKEIILTQEG…MISKAKLIED (77 aa)) adopt a coiled-coil conformation.

It belongs to the GreA/GreB family.

Necessary for efficient RNA polymerase transcription elongation past template-encoded arresting sites. The arresting sites in DNA have the property of trapping a certain fraction of elongating RNA polymerases that pass through, resulting in locked ternary complexes. Cleavage of the nascent transcript by cleavage factors such as GreA or GreB allows the resumption of elongation from the new 3'terminus. GreA releases sequences of 2 to 3 nucleotides. This chain is Transcription elongation factor GreA, found in Mesoplasma florum (strain ATCC 33453 / NBRC 100688 / NCTC 11704 / L1) (Acholeplasma florum).